The chain runs to 21 residues: Serine protease inhibitor 3 (21 aa).

The protein belongs to the protease inhibitor I3 (leguminous Kunitz-type inhibitor) family. Tubers.

Its subcellular location is the vacuole. Functionally, inhibits trypsin and chymotrypsin (serine proteases). Does not inhibit elastase, subtilisin, cathepsin L nor papain (serine and cysteine proteases). Protects the plant by inhibiting proteases of invading organisms, decreasing both hyphal growth and zoospores germination of Phytophthora infestans. The chain is Serine protease inhibitor 3 from Solanum tuberosum (Potato).